The following is a 353-amino-acid chain: Putative ABC transporter ATP-binding protein MG303 homolog (353 aa).

The 241-residue stretch at 72–312 folds into the ABC transporter domain; that stretch reads LYFYNLSVFV…MQLLQRYEIT (241 aa). 107–114 is an ATP binding site; sequence GPSGSGKT.

Belongs to the ABC transporter superfamily.

The chain is Putative ABC transporter ATP-binding protein MG303 homolog from Mycoplasma pneumoniae (strain ATCC 29342 / M129 / Subtype 1) (Mycoplasmoides pneumoniae).